We begin with the raw amino-acid sequence, 219 residues long: Leucyl/phenylalanyl-tRNA--protein transferase (219 aa).

The protein belongs to the L/F-transferase family.

It is found in the cytoplasm. The enzyme catalyses N-terminal L-lysyl-[protein] + L-leucyl-tRNA(Leu) = N-terminal L-leucyl-L-lysyl-[protein] + tRNA(Leu) + H(+). It catalyses the reaction N-terminal L-arginyl-[protein] + L-leucyl-tRNA(Leu) = N-terminal L-leucyl-L-arginyl-[protein] + tRNA(Leu) + H(+). The catalysed reaction is L-phenylalanyl-tRNA(Phe) + an N-terminal L-alpha-aminoacyl-[protein] = an N-terminal L-phenylalanyl-L-alpha-aminoacyl-[protein] + tRNA(Phe). Functionally, functions in the N-end rule pathway of protein degradation where it conjugates Leu, Phe and, less efficiently, Met from aminoacyl-tRNAs to the N-termini of proteins containing an N-terminal arginine or lysine. This chain is Leucyl/phenylalanyl-tRNA--protein transferase, found in Leptospira interrogans serogroup Icterohaemorrhagiae serovar copenhageni (strain Fiocruz L1-130).